A 639-amino-acid polypeptide reads, in one-letter code: Threonine--tRNA ligase (639 aa).

The 61-residue stretch at 1–61 (MIRITLPDNS…DHDARLQIIT (61 aa)) folds into the TGS domain. Positions 242 to 533 (DHRRLGRELD…LIEQHAGALP (292 aa)) are catalytic. Residues cysteine 333, histidine 384, and histidine 510 each coordinate Zn(2+).

This sequence belongs to the class-II aminoacyl-tRNA synthetase family. As to quaternary structure, homodimer. The cofactor is Zn(2+).

It localises to the cytoplasm. The enzyme catalyses tRNA(Thr) + L-threonine + ATP = L-threonyl-tRNA(Thr) + AMP + diphosphate + H(+). Catalyzes the attachment of threonine to tRNA(Thr) in a two-step reaction: L-threonine is first activated by ATP to form Thr-AMP and then transferred to the acceptor end of tRNA(Thr). Also edits incorrectly charged L-seryl-tRNA(Thr). In Paracidovorax citrulli (strain AAC00-1) (Acidovorax citrulli), this protein is Threonine--tRNA ligase.